The chain runs to 277 residues: Putative protein-disulfide oxidoreductase RC0029 (277 aa).

Residues Met1 to Ala22 form the signal peptide. Residues Glu34–Gln80 are disordered. Polar residues predominate over residues Asn39 to Gln80. One can recognise a Thioredoxin domain in the interval Ala76 to Glu265. Cys118 and Cys121 are joined by a disulfide.

It belongs to the thioredoxin family. DsbA subfamily.

Its subcellular location is the periplasm. Functionally, may be required for disulfide bond formation in some proteins. The chain is Putative protein-disulfide oxidoreductase RC0029 from Rickettsia conorii (strain ATCC VR-613 / Malish 7).